Here is a 164-residue protein sequence, read N- to C-terminus: Protein-export protein SecB (164 aa).

It belongs to the SecB family. In terms of assembly, homotetramer, a dimer of dimers. One homotetramer interacts with 1 SecA dimer.

The protein localises to the cytoplasm. In terms of biological role, one of the proteins required for the normal export of preproteins out of the cell cytoplasm. It is a molecular chaperone that binds to a subset of precursor proteins, maintaining them in a translocation-competent state. It also specifically binds to its receptor SecA. This is Protein-export protein SecB from Janthinobacterium sp. (strain Marseille) (Minibacterium massiliensis).